The chain runs to 444 residues: MRRNPRPGSAASSHNHTPNFYSENSNSSHSATSGDSNGRRSAGPELGEPDGRMARGSSCGEPALSSGVPGGDTWAGSSRPKLAPRSHNGQTACGAATVRGGASEPSGSPAVLEEQLNLLPILDLRQEMPPPPVSKSFLSLFFQVLSVFLSLVADGLVCVYREICSIRFLFTAVSLLSIFLAALWWGLLYLIPPLENEPKEMLTLSQYHHRVHSQGQQLQQLQAELSKLHKEVTSVRAAHSERVAKLVFQRLNEDFVRKPDYALSSVGASIDLEKTSSDYEDRNTAYFWNRLSFWNYARPPSVILEPDVFPGNCWAFEGEQGQVVIRLPGHVQLSDITLQHPPPTVAHTGGASSAPRDFAVFGLQADDDETEVFLGKFIFEVQKSEIQTFHLQNDPPSAFPKVKIQILSNWGHPRFTCLYRVRAHGVRISESAEDNAMGVTGGPH.

The interval 1-109 is disordered; sequence MRRNPRPGSA…GGASEPSGSP (109 aa). A compositionally biased stretch (low complexity) spans 19–36; the sequence is NFYSENSNSSHSATSGDS. A run of 2 helical transmembrane segments spans residues 137–159 and 166–188; these read FLSLFFQVLSVFLSLVADGLVCV and IRFLFTAVSLLSIFLAALWWGLL. Residues 204-241 adopt a coiled-coil conformation; sequence LSQYHHRVHSQGQQLQQLQAELSKLHKEVTSVRAAHSE. One can recognise an SUN domain in the interval 267–428; sequence GASIDLEKTS…YRVRAHGVRI (162 aa).

In terms of assembly, self-associates. Interacts with ODF1. May associate with microtubules. Interacts with SUN3 and SYNE1; suggesting the formation of a LINC complexs; a SUN domain-based heterotrimer of SPAG4 and SUN3 may associate with SYNE1. Interacts with SEPT12 and LMNB1; during spermatogenesis. As to expression, testis specific. Exclusively expressed in spermatids.

The protein resides in the membrane. The protein localises to the cytoplasm. It localises to the cytoskeleton. It is found in the flagellum axoneme. Its subcellular location is the nucleus envelope. The protein resides in the nucleus inner membrane. Its function is as follows. Involved in spermatogenesis. Required for sperm head formation but not required to establish and maintain general polarity of the sperm head. Required for anchoring and organization of the manchette. Required for targeting of SUN3 and probably SYNE1 through a probable SUN1:SYNE3 LINC complex to the nuclear envelope and involved in accurate posterior sperm head localization of the complex. May anchor SUN3 the nuclear envelope. Involved in maintenance of the nuclear envelope integrity. May assist the organization and assembly of outer dense fibers (ODFs), a specific structure of the sperm tail. This Rattus norvegicus (Rat) protein is Sperm-associated antigen 4 protein (Spag4).